The following is a 104-amino-acid chain: Growth-regulated protein homolog alpha (104 aa).

The N-terminal stretch at 1–30 (MAPAATAAAPRLLRAAMLFLLLVAAGRRAA) is a signal peptide. Intrachain disulfides connect Cys40–Cys66 and Cys42–Cys82.

The protein belongs to the intercrine alpha (chemokine CxC) family.

Its subcellular location is the secreted. This chain is Growth-regulated protein homolog alpha, found in Bos taurus (Bovine).